The sequence spans 284 residues: D-tagatose-1,6-bisphosphate aldolase subunit GatY (284 aa).

The active-site Proton donor is the Asp-82. His-83 and His-180 together coordinate Zn(2+). Gly-181 serves as a coordination point for dihydroxyacetone phosphate. Position 208 (His-208) interacts with Zn(2+). Dihydroxyacetone phosphate-binding positions include 209–211 (GAS) and 230–233 (NVAT).

Belongs to the class II fructose-bisphosphate aldolase family. TagBP aldolase GatY subfamily. In terms of assembly, forms a complex with GatZ. Zn(2+) serves as cofactor.

The catalysed reaction is D-tagatofuranose 1,6-bisphosphate = D-glyceraldehyde 3-phosphate + dihydroxyacetone phosphate. Its pathway is carbohydrate metabolism; D-tagatose 6-phosphate degradation; D-glyceraldehyde 3-phosphate and glycerone phosphate from D-tagatose 6-phosphate: step 2/2. Functionally, catalytic subunit of the tagatose-1,6-bisphosphate aldolase GatYZ, which catalyzes the reversible aldol condensation of dihydroxyacetone phosphate (DHAP or glycerone-phosphate) with glyceraldehyde 3-phosphate (G3P) to produce tagatose 1,6-bisphosphate (TBP). Requires GatZ subunit for full activity and stability. Is involved in the catabolism of galactitol. The sequence is that of D-tagatose-1,6-bisphosphate aldolase subunit GatY from Shigella flexneri.